Reading from the N-terminus, the 330-residue chain is Olfactory receptor 5T9 (330 aa).

The Extracellular segment spans residues 1–37 (MSIHSPGYTVRRIPVNNVTDTTMFILTGFTDDADLQV). The N-linked (GlcNAc...) asparagine glycan is linked to asparagine 17. A helical membrane pass occupies residues 38-58 (LLFLLFFVIYLFTLIGNLGLV). Residues 59–66 (LLVIGDSR) lie on the Cytoplasmic side of the membrane. Residues 67-87 (LHNPMYYFLSVLSFLDACYST) traverse the membrane as a helical segment. Topologically, residues 88 to 111 (VVTPKMLVNFISNDKSISYPGCVT) are extracellular. Cysteine 109 and cysteine 201 form a disulfide bridge. A helical membrane pass occupies residues 112–132 (EMFLFVTFGTTECFLLAAMAY). The Cytoplasmic segment spans residues 133-145 (DRFVAIYNPLLYA). The helical transmembrane segment at 146–166 (VKMSPRVYIPLIIACYSGGIM) threads the bilayer. Topologically, residues 167-208 (HATIHTVATFSLSFCASNEIRHVFCDIPPLLAISCSNTNINQ) are extracellular. Residues 209–229 (LLLFYCVGSIEIITILIVLVS) traverse the membrane as a helical segment. At 230-249 (YSFILFAILKMNSAEGRRKI) the chain is on the cytoplasmic side. A helical transmembrane segment spans residues 250–270 (FSTCGSHLTGVSIYHGTILFM). Residues 271 to 283 (YVRPSSNYALEHD) lie on the Extracellular side of the membrane. The chain crosses the membrane as a helical span at residues 284–304 (MIVSTFYTIVIPMLNPIIYSL). The Cytoplasmic portion of the chain corresponds to 305–330 (RNKDVKEAMKKIFERNFFMNKVHFKL).

This sequence belongs to the G-protein coupled receptor 1 family.

It is found in the cell membrane. Its function is as follows. Potential odorant receptor. The protein is Olfactory receptor 5T9 of Mus musculus (Mouse).